We begin with the raw amino-acid sequence, 141 residues long: Large ribosomal subunit protein uL11 (141 aa).

It belongs to the universal ribosomal protein uL11 family. As to quaternary structure, part of the ribosomal stalk of the 50S ribosomal subunit. Interacts with L10 and the large rRNA to form the base of the stalk. L10 forms an elongated spine to which L12 dimers bind in a sequential fashion forming a multimeric L10(L12)X complex. In terms of processing, one or more lysine residues are methylated.

In terms of biological role, forms part of the ribosomal stalk which helps the ribosome interact with GTP-bound translation factors. This is Large ribosomal subunit protein uL11 from Phytoplasma australiense.